The following is a 572-amino-acid chain: Sulfite reductase [NADPH] hemoprotein beta-component (572 aa).

[4Fe-4S] cluster contacts are provided by cysteine 437, cysteine 443, cysteine 482, and cysteine 486. A siroheme-binding site is contributed by cysteine 486.

The protein belongs to the nitrite and sulfite reductase 4Fe-4S domain family. In terms of assembly, alpha(8)-beta(8). The alpha component is a flavoprotein, the beta component is a hemoprotein. It depends on siroheme as a cofactor. [4Fe-4S] cluster serves as cofactor.

It carries out the reaction hydrogen sulfide + 3 NADP(+) + 3 H2O = sulfite + 3 NADPH + 4 H(+). It functions in the pathway sulfur metabolism; hydrogen sulfide biosynthesis; hydrogen sulfide from sulfite (NADPH route): step 1/1. In terms of biological role, component of the sulfite reductase complex that catalyzes the 6-electron reduction of sulfite to sulfide. This is one of several activities required for the biosynthesis of L-cysteine from sulfate. The chain is Sulfite reductase [NADPH] hemoprotein beta-component from Bacillus licheniformis (strain ATCC 14580 / DSM 13 / JCM 2505 / CCUG 7422 / NBRC 12200 / NCIMB 9375 / NCTC 10341 / NRRL NRS-1264 / Gibson 46).